A 367-amino-acid chain; its full sequence is Innexin inx2 (367 aa).

Residues 1 to 22 are Cytoplasmic-facing; it reads MFDVFGSVKGLLKIDQVCIDNN. The chain crosses the membrane as a helical span at residues 23–43; sequence VFRMHYKATVIILIAFSLLVT. Residues 44–109 are Extracellular-facing; the sequence is SRQYIGDPID…EDEVKYHKYY (66 aa). Residues 110–130 traverse the membrane as a helical segment; sequence QWVCFVLFFQAILFYVPRYLW. Residues 130–179 form an interaction with shg region; the sequence is WKSWEGGRLKMLVMDLNSPIVNDECKNDRKKILVDYFIGNLNRHNFYAFR. Over 131 to 179 the chain is Cytoplasmic; the sequence is KSWEGGRLKMLVMDLNSPIVNDECKNDRKKILVDYFIGNLNRHNFYAFR. The chain crosses the membrane as a helical span at residues 180-200; it reads FFVCEALNFVNVIGQIYFVDF. At 201-266 the chain is on the extracellular side; sequence FLDGEFSTYG…VLPLNIVNEK (66 aa). The chain crosses the membrane as a helical span at residues 267 to 287; the sequence is IYVFLWFWFIILSIMSGISLI. The Cytoplasmic portion of the chain corresponds to 288 to 367; sequence YRIAVVAGPK…HSAHKRPFDA (80 aa).

Belongs to the pannexin family. Monomer and heterooligomer with ogre or Inx3 (via cytoplasmic C-terminal region). Interacts (via cytoplasmic loop) with shg (via cytoplasmic region). Interacts with arm. As to expression, in ovary, expressed in inner germarial sheath cells, prefollicular cells, follicle cells, nurse cells and oocytes. Expressed in embryonic epithelial cells. Expressed in foregut and hindgut from stage 11-17, segmentally repeated tracheal placodes at stage 14, salivary gland at stage 16 and proventriculus at stage 16-17 (at protein level). During germband extension stage (stage 7), expressed in epidermal epithelial cells. Expressed in cephalic furrow. Repeating epidermal pattern emerges at stage 11, refines to one or two cells at each side of the segment borders by stage 13. Expressed in the imaginal wing disk. In pupae, expressed in the CNS and in primary, secondary and tertiary pigment cells of the retina. Expressed in optic lamina of the adult CNS.

The protein localises to the cell membrane. Its subcellular location is the cell junction. The protein resides in the gap junction. It localises to the cytoplasm. It is found in the apical cell membrane. The protein localises to the apicolateral cell membrane. Its subcellular location is the basolateral cell membrane. The protein resides in the lateral cell membrane. Structural components of the gap junctions. Involved in gap junctional communication between germline and somatic cells which is essential for normal oogenesis. In embryonic epidermis, required for epithelial morphogenesis. Required for keyhole formation during early stages of proventriculus development in response to wg signaling. In follicle cells, promotes the formation of egg chambers in part through regulation of shg and baz at the boundary between germ cells and follicle cells. In inner germarial sheath cells, required for survival of early germ cells and for cyst formation. The polypeptide is Innexin inx2 (Inx2) (Drosophila melanogaster (Fruit fly)).